The chain runs to 176 residues: MIVVVLVCIFLANGIKATAVQPDLHEHPVLTWDLLQHFVGNTLYITTHQVLALPLGSRVECESVDGFNCTRPGFQNSAHDHIDFYFDLSNPFYSFVDNFYIVVEGNQKINLRLVGAVPKQKRLKLSYKATRCLKLVFPRNYWSSRCLLLYRMVSTCNGRYKQPHCILGSLDLIWQC.

A signal peptide spans 1 to 17 (MIVVVLVCIFLANGIKA).

This is Non-structural protein 7b from Felidae (cat family).